The following is a 341-amino-acid chain: D-aspartate oxidase (341 aa).

FAD-binding residues include aspartate 36, arginine 37, threonine 43, serine 44, methionine 50, glycine 307, isoleucine 311, and serine 312. The short motif at 339–341 is the Microbody targeting signal element; it reads SKL.

It belongs to the DAMOX/DASOX family. Dimer or tetramer. Interacts with PEX5; the interaction is direct and required for localization of DDO to the peroxisome. FAD serves as cofactor. As to expression, expressed in the small intestine (at protein level). Expressed in the ependymal cell layer of the telencephalic ventricles, hippocampus, thalamus, cerebellum, midbrain region, pons, olfactory bulbs, and cortex. Repressed in the testis. In terms of tissue distribution, expressed in the kidney, liver, stomach, pancreas, uterus, lactating breast, involuting mammary gland, brain, heart, lung, and skin. Expressed in kidney, liver, pancreas, and in the mammary gland regardless of lactation status.

The protein localises to the peroxisome matrix. The protein resides in the cytoplasm. Its subcellular location is the cytosol. It catalyses the reaction D-aspartate + O2 + H2O = oxaloacetate + H2O2 + NH4(+). The enzyme catalyses D-glutamate + O2 + H2O = H2O2 + 2-oxoglutarate + NH4(+). Its activity is regulated as follows. Inhibited by the benzodiazepine olanzapine; chronic systemic administration of the benzodiazepine increases levels of D-aspartate and L-glutamate in the prefrontal cortex. Efficiently inhibited by 5-aminonicotinic acid (5-AN) and 1,4-Dihydropyrido[2,3-b]pyrazine-2,3-dione (DPPD). Inhibited by aminooxyacetic acid, thiolactomycin, anthranilic acid, malonate, meso-tartrate and L-tartrate. Benzoate has no effect on activity. In terms of biological role, selectively catalyzes the oxidative deamination of acidic amino acids. Suppresses the level of D-aspartate in the brain, an amino acid that can act as an agonist for glutamate receptors. Protects the organism from the toxicity of D-amino acids. May also function in the intestine. Functionally, selectively catalyzes the oxidative deamination of acidic amino acids. Does not exhibit D-aspartate oxidase activity. The polypeptide is D-aspartate oxidase (Ddo) (Mus musculus (Mouse)).